Reading from the N-terminus, the 340-residue chain is Holliday junction branch migration complex subunit RuvB (340 aa).

The large ATPase domain (RuvB-L) stretch occupies residues methionine 1–tyrosine 183. ATP is bound by residues leucine 22, arginine 23, glycine 64, lysine 67, threonine 68, threonine 69, glutamate 130–phenylalanine 132, arginine 173, tyrosine 183, and arginine 220. Threonine 68 contacts Mg(2+). Residues alanine 184 to glutamate 254 are small ATPAse domain (RuvB-S). Positions aspartate 257–phenylalanine 340 are head domain (RuvB-H). Positions 312 and 317 each coordinate DNA.

The protein belongs to the RuvB family. In terms of assembly, homohexamer. Forms an RuvA(8)-RuvB(12)-Holliday junction (HJ) complex. HJ DNA is sandwiched between 2 RuvA tetramers; dsDNA enters through RuvA and exits via RuvB. An RuvB hexamer assembles on each DNA strand where it exits the tetramer. Each RuvB hexamer is contacted by two RuvA subunits (via domain III) on 2 adjacent RuvB subunits; this complex drives branch migration. In the full resolvosome a probable DNA-RuvA(4)-RuvB(12)-RuvC(2) complex forms which resolves the HJ.

The protein resides in the cytoplasm. The enzyme catalyses ATP + H2O = ADP + phosphate + H(+). Functionally, the RuvA-RuvB-RuvC complex processes Holliday junction (HJ) DNA during genetic recombination and DNA repair, while the RuvA-RuvB complex plays an important role in the rescue of blocked DNA replication forks via replication fork reversal (RFR). RuvA specifically binds to HJ cruciform DNA, conferring on it an open structure. The RuvB hexamer acts as an ATP-dependent pump, pulling dsDNA into and through the RuvAB complex. RuvB forms 2 homohexamers on either side of HJ DNA bound by 1 or 2 RuvA tetramers; 4 subunits per hexamer contact DNA at a time. Coordinated motions by a converter formed by DNA-disengaged RuvB subunits stimulates ATP hydrolysis and nucleotide exchange. Immobilization of the converter enables RuvB to convert the ATP-contained energy into a lever motion, pulling 2 nucleotides of DNA out of the RuvA tetramer per ATP hydrolyzed, thus driving DNA branch migration. The RuvB motors rotate together with the DNA substrate, which together with the progressing nucleotide cycle form the mechanistic basis for DNA recombination by continuous HJ branch migration. Branch migration allows RuvC to scan DNA until it finds its consensus sequence, where it cleaves and resolves cruciform DNA. This is Holliday junction branch migration complex subunit RuvB from Syntrophus aciditrophicus (strain SB).